The following is a 249-amino-acid chain: Undecaprenyl-diphosphatase (249 aa).

8 helical membrane-spanning segments follow: residues 11-31 (GLTE…TAIF), 35-55 (PDVG…LIFV), 80-100 (LVLS…FIES), 101-121 (VFSS…LMLL), 135-155 (IPYL…LPGI), 180-200 (FLMS…KVAF), 202-222 (TEQI…LYLV), and 226-246 (VIGG…FFVL).

It belongs to the UppP family.

The protein resides in the cell membrane. It catalyses the reaction di-trans,octa-cis-undecaprenyl diphosphate + H2O = di-trans,octa-cis-undecaprenyl phosphate + phosphate + H(+). Functionally, catalyzes the dephosphorylation of undecaprenyl diphosphate (UPP). This chain is Undecaprenyl-diphosphatase, found in Methanococcus maripaludis (strain C6 / ATCC BAA-1332).